The sequence spans 424 residues: Tyrosine--tRNA ligase (424 aa).

Tyr37 is a binding site for L-tyrosine. The short motif at 42-51 (PTADSLHLGH) is the 'HIGH' region element. Residue Lys144 is modified to N6-acetyllysine. Residues Tyr175 and Gln179 each contribute to the L-tyrosine site. The short motif at 235 to 239 (KFGKT) is the 'KMSKS' region element. Lys238 lines the ATP pocket. The region spanning 357 to 414 (ADLMQALVDSELQPSRGQARKTIASNAITINGEKQSDPEYFFKEEDRLFGRFTLLRRG) is the S4 RNA-binding domain.

It belongs to the class-I aminoacyl-tRNA synthetase family. TyrS type 1 subfamily. As to quaternary structure, homodimer.

Its subcellular location is the cytoplasm. The enzyme catalyses tRNA(Tyr) + L-tyrosine + ATP = L-tyrosyl-tRNA(Tyr) + AMP + diphosphate + H(+). Its function is as follows. Catalyzes the attachment of tyrosine to tRNA(Tyr) in a two-step reaction: tyrosine is first activated by ATP to form Tyr-AMP and then transferred to the acceptor end of tRNA(Tyr). This is Tyrosine--tRNA ligase from Escherichia coli O127:H6 (strain E2348/69 / EPEC).